The primary structure comprises 85 residues: Small ribosomal subunit protein bS16 (85 aa).

Belongs to the bacterial ribosomal protein bS16 family.

In Xanthomonas oryzae pv. oryzae (strain PXO99A), this protein is Small ribosomal subunit protein bS16.